Consider the following 1127-residue polypeptide: Elongation factor-like GTPase 1 (1127 aa).

Residues 17–272 (ANIRNICVLA…LLKTLWGDYY (256 aa)) enclose the tr-type G domain. Residues 26 to 33 (AHVDHGKT), 92 to 96 (DSPGH), and 146 to 149 (NKID) each bind GTP. Residues 429 to 496 (KPRPLTQEEM…VASVSRQPVS (68 aa)) are disordered. 2 stretches are compositionally biased toward basic and acidic residues: residues 438-452 (MAQR…HAEK) and 474-484 (SPHEDEPRGDE). Residue K528 is modified to N6-acetyllysine.

This sequence belongs to the TRAFAC class translation factor GTPase superfamily. Classic translation factor GTPase family. Associates with the 60S ribosomal subunit. Found in a complex consisting of the 60S ribosomal subunit, SBDS and EFL1.

It carries out the reaction GTP + H2O = GDP + phosphate + H(+). With respect to regulation, GTPase activity is stimulated in the presence of 60S ribosome subunits. Functionally, GTPase involved in the biogenesis of the 60S ribosomal subunit and translational activation of ribosomes. Together with SBDS, triggers the GTP-dependent release of EIF6 from 60S pre-ribosomes in the cytoplasm, thereby activating ribosomes for translation competence by allowing 80S ribosome assembly and facilitating EIF6 recycling to the nucleus, where it is required for 60S rRNA processing and nuclear export. The polypeptide is Elongation factor-like GTPase 1 (Efl1) (Mus musculus (Mouse)).